A 144-amino-acid chain; its full sequence is Transcriptional regulator SlyA (144 aa).

In terms of domain architecture, HTH marR-type spans 2-135 (ESPLGSDLAR…LLHLIRKLEQ (134 aa)). The segment at residues 49–72 (QIQLAKAIGIEQPSLVRTLDQLEE) is a DNA-binding region (H-T-H motif).

It belongs to the SlyA family. Homodimer.

Transcription regulator that can specifically activate or repress expression of target genes. This is Transcriptional regulator SlyA from Klebsiella pneumoniae (strain 342).